A 204-amino-acid polypeptide reads, in one-letter code: Leucyl/phenylalanyl-tRNA--protein transferase (204 aa).

This sequence belongs to the L/F-transferase family.

It localises to the cytoplasm. The catalysed reaction is N-terminal L-lysyl-[protein] + L-leucyl-tRNA(Leu) = N-terminal L-leucyl-L-lysyl-[protein] + tRNA(Leu) + H(+). The enzyme catalyses N-terminal L-arginyl-[protein] + L-leucyl-tRNA(Leu) = N-terminal L-leucyl-L-arginyl-[protein] + tRNA(Leu) + H(+). It carries out the reaction L-phenylalanyl-tRNA(Phe) + an N-terminal L-alpha-aminoacyl-[protein] = an N-terminal L-phenylalanyl-L-alpha-aminoacyl-[protein] + tRNA(Phe). Functions in the N-end rule pathway of protein degradation where it conjugates Leu, Phe and, less efficiently, Met from aminoacyl-tRNAs to the N-termini of proteins containing an N-terminal arginine or lysine. This is Leucyl/phenylalanyl-tRNA--protein transferase from Rhizobium johnstonii (strain DSM 114642 / LMG 32736 / 3841) (Rhizobium leguminosarum bv. viciae).